Reading from the N-terminus, the 959-residue chain is MTVRTPGTPASKIDKTPATTPNGHRGREEKIVVTVRLRPLNKRELSAKDHAAWECIDDHTIIYRPVPQERAAQPASSFTFDKVFGPDSITEAVYEEGVKNVALSSLMGINATIFAYGQTSSGKTYTMRGITEKAVNDIYAHIMSTPEREFRIRISGLEIYNENVRDLLNSESGRSLKLLDDPEKGTVVEKLVEETASNDQHLRHLISICEAQRQVGETALNDTSSRSHQIIRLTIESTLRESSDCVRSYVASLNFVDLAGSERASQTNADGARLREGCHINLSLMTLTTVIRKLSVGKRSGHIPYRDSKLTRILQHSLGGNARTAIICTLSPASSHVEQSRNTLYFATRAKEVTNNAQVNMVVSDKQLVKHLQKEVARLEAELRTPDPANEKDWKIQQMEMEIEELKRQRDLAQSQVDELRRKLQEEQGPKPSESVSPVVKKCLSFSGTLSPNLEEKAPVRSERTRNTMGRQSMRQSLAAPFTLMHEIRKLEHLQEQLGDEANRALEVLQKEVACHRLGNQDAAETIAKLQAEIREMRSIRPLPKEVEVGSVVAVNKSVSANLKEEIARLHSQGSTIADLEEQLENVQKSLDKLVMSLPSNNDQQSNNDTTQKAKHPSKKKKLLPLTSSNSINRQNFLKSPCSPLSTARQVLDCEVENRAPDSDDLSCEIQPDETPTKSDGGDVSSKEGTPYRRSSSVNMRKMQKMFQEAAEENVRNIRSYVTELKERVAKLQYQKQLLVCQVLELEANEAAGYNLEDDENIHQIPEESPVSWQITFKEQRQQIIDLWDVCYVSIIHRSQFYLLFKGDPADEIYLEVELRRLTWLQQHLAELGNATPARVGNEPTVSLSSSIRALKREREFLAKRLTTRLTAEERDYLYIKWEVPLEGKQRRMQFINKLWTNPHDAKHVHESAEIVAKLVGFCEGGNMSREMFELNFVLPSDRRPWFAGWNQISDLLHI.

Residues 1–28 are disordered; it reads MTVRTPGTPASKIDKTPATTPNGHRGRE. Residues 30–353 form the Kinesin motor domain; sequence KIVVTVRLRP…LYFATRAKEV (324 aa). 117–124 contributes to the ATP binding site; sequence GQTSSGKT. At Thr145 the chain carries Phosphothreonine. Residues 362–429 are a coiled coil; that stretch reads VVSDKQLVKH…LRRKLQEEQG (68 aa). Disordered regions lie at residues 417–438, 451–473, 598–640, and 658–700; these read VDEL…SVSP, SPNL…GRQS, LPSN…FLKS, and NRAP…SVNM. Composition is skewed to basic and acidic residues over residues 418-429 and 454-466; these read DELRRKLQEEQG and LEEK…ERTR. Residues 557-598 are a coiled coil; it reads KSVSANLKEEIARLHSQGSTIADLEEQLENVQKSLDKLVMSL. The span at 600–611 shows a compositional bias: low complexity; it reads SNNDQQSNNDTT. The span at 613 to 623 shows a compositional bias: basic residues; sequence KAKHPSKKKKL. Residues 630–640 show a composition bias toward polar residues; sequence NSINRQNFLKS. A phosphothreonine mark is found at Thr675 and Thr690. Residues 685–756 form a required for the binding to NPK1 region; that stretch reads SSKEGTPYRR…EANEAAGYNL (72 aa).

It belongs to the TRAFAC class myosin-kinesin ATPase superfamily. Kinesin family. KIN-7 subfamily. As to quaternary structure, interacts (via C-terminus) with NPK1 (via C-terminus). Phosphorylated at Thr-145, Thr-675 and Thr-690 by CDKAs and CDKBs. The phosphorylation occurs before metaphase and inhibits the interaction with NPK1 preventing the transition to cytokinesis.

The protein resides in the cytoplasm. The protein localises to the nucleus. It is found in the cytoskeleton. It localises to the phragmoplast. Its function is as follows. Probable plus end-directed motor protein that functions in the NACK-PQR (NPK1-NQK1/MEK1-NRK1) MAP kinase signaling pathway, which is essential for somatic cell cytokinesis, especially for the cell-plate formation and its expansion. Regulates the activity and the localization of NPK1 by association through the non-catalytic region of the kinase. This is Kinesin-like protein NACK1 (NACK1) from Nicotiana tabacum (Common tobacco).